The chain runs to 89 residues: Large ribosomal subunit protein bL27 (89 aa).

The disordered stretch occupies residues 1 to 26 (MAHKKGVGSSRNGRDSESKRLGVKEG). The span at 12 to 26 (NGRDSESKRLGVKEG) shows a compositional bias: basic and acidic residues.

This sequence belongs to the bacterial ribosomal protein bL27 family.

The protein is Large ribosomal subunit protein bL27 of Desulforamulus reducens (strain ATCC BAA-1160 / DSM 100696 / MI-1) (Desulfotomaculum reducens).